Here is an 89-residue protein sequence, read N- to C-terminus: Small ribosomal subunit protein uS15 (89 aa).

This sequence belongs to the universal ribosomal protein uS15 family. Part of the 30S ribosomal subunit. Forms a bridge to the 50S subunit in the 70S ribosome, contacting the 23S rRNA.

In terms of biological role, one of the primary rRNA binding proteins, it binds directly to 16S rRNA where it helps nucleate assembly of the platform of the 30S subunit by binding and bridging several RNA helices of the 16S rRNA. Its function is as follows. Forms an intersubunit bridge (bridge B4) with the 23S rRNA of the 50S subunit in the ribosome. This Shewanella loihica (strain ATCC BAA-1088 / PV-4) protein is Small ribosomal subunit protein uS15.